The sequence spans 457 residues: MTASDWAGFFADEASLDREAYLFLDYYLECSGDPELAAAHFCSEQSTAQWRRVGSDEDLRPRFGARVVDLQILDGARPEFSYGVGSGSDAPVTACRLRIAHPHGNFGPRLPNLLSAICGEGTFFSPGAPIVKLLDIEFPESYLACFQGPQFGVAGLRERLQVHDRPIFFGVIKPNIGLPPEAFSELGHESWLGGLDIAKDDEMLADTDWCPLDRRAELLGEARRRAEAATGVPKIYLANITDEVDRLVELHDRAVERGANALLINAMPTGLSAVRMLRKHAQVPLMAHFPFIAPFARLERFGVHTRVFTKLQRLAGYDVIIMPGFGPRMHMTDDEVRACATACLEPMGPIKPSLPVPGGSDWAGTLRPLYEKLGTVDFGFVPGRGVFGHPMGPRAGAASIRQAWEAIVAGETLEERAKRHPELSAAIAAFGKPAHGQAASPQPSEQASEPDAAGGDS.

Mg(2+) is bound by residues Lys-199, Asp-201, and Glu-202. The residue at position 199 (Lys-199) is an N6-carboxylysine. A disordered region spans residues 426 to 457 (AIAAFGKPAHGQAASPQPSEQASEPDAAGGDS).

Belongs to the RuBisCO large chain family. Type IV subfamily. Mg(2+) serves as cofactor.

May be involved in sulfur metabolism and oxidative stress response. Does not show RuBisCO activity. The polypeptide is Ribulose bisphosphate carboxylase-like protein (Allochromatium vinosum (strain ATCC 17899 / DSM 180 / NBRC 103801 / NCIMB 10441 / D) (Chromatium vinosum)).